A 282-amino-acid chain; its full sequence is HTH-type transcriptional activator RhaR (282 aa).

In terms of domain architecture, HTH araC/xylS-type spans 179–277 (DKLITALANS…GMTPSQWRHL (99 aa)). DNA-binding regions (H-T-H motif) lie at residues 196 to 217 (DAFCQQEQCSERVLRQQFRAQT) and 244 to 267 (ISEISMQCGFEDSNYFSVVFTRET).

In terms of assembly, binds DNA as a dimer.

The protein localises to the cytoplasm. Activates expression of the rhaSR operon in response to L-rhamnose. This Salmonella dublin (strain CT_02021853) protein is HTH-type transcriptional activator RhaR.